The sequence spans 401 residues: Dihydrolipoyllysine-residue succinyltransferase component of 2-oxoglutarate dehydrogenase complex (401 aa).

A Lipoyl-binding domain is found at 2–77 (SVKIIVPSLG…AVGEEIGEIN (76 aa)). Lys43 bears the N6-lipoyllysine mark. In terms of domain architecture, Peripheral subunit-binding (PSBD) spans 115–152 (ILAPSVQKLVTENKLDPNNIKGTGRDGRITKGDVLETI). Catalysis depends on residues His372 and Asp376.

This sequence belongs to the 2-oxoacid dehydrogenase family. Forms a 24-polypeptide structural core with octahedral symmetry. Part of the 2-oxoglutarate dehydrogenase (OGDH) complex composed of E1 (2-oxoglutarate dehydrogenase), E2 (dihydrolipoamide succinyltransferase) and E3 (dihydrolipoamide dehydrogenase); the complex contains multiple copies of the three enzymatic components (E1, E2 and E3). (R)-lipoate serves as cofactor.

It carries out the reaction N(6)-[(R)-dihydrolipoyl]-L-lysyl-[protein] + succinyl-CoA = N(6)-[(R)-S(8)-succinyldihydrolipoyl]-L-lysyl-[protein] + CoA. Its pathway is amino-acid degradation; L-lysine degradation via saccharopine pathway; glutaryl-CoA from L-lysine: step 6/6. Functionally, E2 component of the 2-oxoglutarate dehydrogenase (OGDH) complex which catalyzes the second step in the conversion of 2-oxoglutarate to succinyl-CoA and CO(2). This Rickettsia felis (strain ATCC VR-1525 / URRWXCal2) (Rickettsia azadi) protein is Dihydrolipoyllysine-residue succinyltransferase component of 2-oxoglutarate dehydrogenase complex (sucB).